The following is a 90-amino-acid chain: MKAVHMNASGQVQAVGFRYTTKLLADRLKVTGWVKNNPDGTVEIEAQAPDAVLDQFIDGVKASPSPSGRVNKLTVKSIPLFEGQDFIVKY.

In terms of domain architecture, Acylphosphatase-like spans 3–90 (AVHMNASGQV…FEGQDFIVKY (88 aa)). Catalysis depends on residues Arg-18 and Asn-36.

It belongs to the acylphosphatase family.

It catalyses the reaction an acyl phosphate + H2O = a carboxylate + phosphate + H(+). This Pediococcus pentosaceus (strain ATCC 25745 / CCUG 21536 / LMG 10740 / 183-1w) protein is Acylphosphatase (acyP).